The sequence spans 255 residues: BPI fold-containing family A member 1 (255 aa).

An N-terminal signal peptide occupies residues 1–19 (MFHIGSLVVLCGLLAPTTA). The segment at 87–92 (LLGSLL) is important for surfactant activity and antibacterial properties. Asn157, Asn178, and Asn205 each carry an N-linked (GlcNAc...) asparagine glycan. Cys179 and Cys223 are oxidised to a cystine.

This sequence belongs to the BPI/LBP/Plunc superfamily. Plunc family. As to quaternary structure, monomer. Interacts (via N-terminus) with SCNN1B, a subunit of the heterotrimeric epithelial sodium channel (ENaC); this inhibits proteolytic activation of ENaC. As to expression, expressed in trachea, and at lower levels in nasal epithelium.

The protein resides in the secreted. Lipid-binding protein which shows high specificity for the surfactant phospholipid dipalmitoylphosphatidylcholine (DPPC). Plays a role in the innate immune responses of the upper airways. Reduces the surface tension in secretions from airway epithelia and inhibits the formation of biofilm by pathogenic Gram-negative bacteria, such as P.aeruginosa and K.pneumoniae. Negatively regulates proteolytic cleavage of SCNN1G, an event that is required for activation of the epithelial sodium channel (ENaC), and thereby contributes to airway surface liquid homeostasis and proper clearance of mucus. Plays a role in the airway inflammatory response after exposure to irritants. May attract macrophages and neutrophils. This chain is BPI fold-containing family A member 1 (BPIFA1), found in Bos taurus (Bovine).